Reading from the N-terminus, the 121-residue chain is Somatostatin-1 (121 aa).

The N-terminal stretch at 1-24 is a signal peptide; that stretch reads MKMVSSSRLRCLLVLLLSLTASIS. Residues 25 to 105 constitute a propeptide that is removed on maturation; the sequence is CSFAGQRDSK…SGGPLLAPRE (81 aa). The tract at residues 76–99 is disordered; that stretch reads NFPLAEGGPEDAHADLERAASGGP. Cysteine 110 and cysteine 121 are oxidised to a cystine.

The protein belongs to the somatostatin family.

Its subcellular location is the secreted. In terms of biological role, somatostatin inhibits the release of somatotropin. In Lophius americanus (American angler), this protein is Somatostatin-1 (sst1).